We begin with the raw amino-acid sequence, 146 residues long: Cytochrome c oxidase assembly factor 1 homolog (146 aa).

Over 1–14 (MMWQKYAGSRRSMP) the chain is Mitochondrial matrix. Residues 15–37 (LGARILFHGVFYAGGFAIVYYLI) traverse the membrane as a helical segment. Topologically, residues 38–146 (QKFHSRALYY…GENGDEVKKE (109 aa)) are mitochondrial intermembrane.

Belongs to the COA1 family. Component of the MITRAC (mitochondrial translation regulation assembly intermediate of cytochrome c oxidase complex) complex, the core components of this complex being COA3/MITRAC12 and COX14. Interacts with COX17 and COA6. Part of the mitochondrial complex I assembly/MCIA complex that comprises at least the core subunits TMEM126B, NDUFAF1, ECSIT and ACAD9 and complement subunits such as COA1 and TMEM186.

The protein resides in the mitochondrion inner membrane. Component of the MITRAC (mitochondrial translation regulation assembly intermediate of cytochrome c oxidase complex) complex, that regulates cytochrome c oxidase assembly. MITRAC complexes regulate both translation of mitochondrial encoded components and assembly of nuclear-encoded components imported in mitochondrion. Required for assembly of mitochondrial respiratory chain complex I and complex IV. As part of the MCIA complex, required for efficient assembly of the mitochondrial complex I. This Homo sapiens (Human) protein is Cytochrome c oxidase assembly factor 1 homolog.